The chain runs to 365 residues: Protein RecA (365 aa).

An ATP-binding site is contributed by 77–84; that stretch reads GPESSGKT.

It belongs to the RecA family.

The protein resides in the cytoplasm. In terms of biological role, can catalyze the hydrolysis of ATP in the presence of single-stranded DNA, the ATP-dependent uptake of single-stranded DNA by duplex DNA, and the ATP-dependent hybridization of homologous single-stranded DNAs. It interacts with LexA causing its activation and leading to its autocatalytic cleavage. This chain is Protein RecA, found in Mesorhizobium japonicum (strain LMG 29417 / CECT 9101 / MAFF 303099) (Mesorhizobium loti (strain MAFF 303099)).